The following is a 112-amino-acid chain: Nitrogen regulatory protein GlnK2 (112 aa).

ADP is bound by residues T29, 38–39 (QQ), V64, and 87–90 (GDGK). Residues T29, 38–39 (QQ), V64, 87–90 (GDGK), and 101–103 (RIR) each bind ATP.

Belongs to the P(II) protein family. As to quaternary structure, homotrimer. Interacts and forms a complex with Amt2.

The protein resides in the cytoplasm. Its activity is regulated as follows. Binding of adenosine nucleotides results in distinct, cooperative behavior for ATP and ADP. GlnK2 is completely insensitive to 2-oxoglutarate at a low level of intracellular nitrogen. Its function is as follows. Involved in the regulation of nitrogen metabolism. Regulates the activity of its targets by protein-protein interaction in response to the nitrogen status of the cell. Regulates the activity of the ammonia channel Amt2 via direct interaction. This is Nitrogen regulatory protein GlnK2 from Archaeoglobus fulgidus (strain ATCC 49558 / DSM 4304 / JCM 9628 / NBRC 100126 / VC-16).